The chain runs to 444 residues: Acyl-CoA 6-desaturase (444 aa).

Topologically, residues 1-130 are cytoplasmic; that stretch reads MGGGGQQTDR…EAEGCFKTQP (130 aa). The region spanning 18-95 is the Cytochrome b5 heme-binding domain; it reads FSSYTWEEVQ…LKPLLIGELE (78 aa). Residues 131–151 traverse the membrane as a helical segment; sequence LFFALHLGHILLLEAIAFMMV. The Lumenal segment spans residues 152 to 157; it reads WYFGTG. Residues 158 to 178 form a helical membrane-spanning segment; it reads WINTLIVAVILATAQSQAGWL. Residues 179–264 lie on the Cytoplasmic side of the membrane; that stretch reads QHDFGHLSVF…KHLPYNHQHK (86 aa). Residues 180–184 carry the Histidine box-1 motif; sequence HDFGH. Positions 217 to 221 match the Histidine box-2 motif; it reads HFQHH. A helical membrane pass occupies residues 265 to 285; that stretch reads YFFFIGPPLLIPVYFQFQIFH. Residues 286 to 305 lie on the Lumenal side of the membrane; that stretch reads NMISHGMWVDLLWCISYYVR. Residues 306–326 form a helical membrane-spanning segment; that stretch reads YFLCYTQFYGVFWAIILFNFV. The Cytoplasmic portion of the chain corresponds to 327-444; sequence RFMESHWFVW…ELWLDAYLNK (118 aa). Residues 382–386 carry the Histidine box-3 motif; it reads QIEHH.

It belongs to the fatty acid desaturase type 1 family.

The protein localises to the endoplasmic reticulum membrane. The catalysed reaction is (9Z,12Z)-octadecadienoyl-CoA + 2 Fe(II)-[cytochrome b5] + O2 + 2 H(+) = (6Z,9Z,12Z)-octadecatrienoyl-CoA + 2 Fe(III)-[cytochrome b5] + 2 H2O. It catalyses the reaction (9Z,12Z,15Z)-octadecatrienoyl-CoA + 2 Fe(II)-[cytochrome b5] + O2 + 2 H(+) = (6Z,9Z,12Z,15Z)-octadecatetraenoyl-CoA + 2 Fe(III)-[cytochrome b5] + 2 H2O. It carries out the reaction (8Z,11Z,14Z,17Z)-eicosatetraenoyl-CoA + 2 Fe(II)-[cytochrome b5] + O2 + 2 H(+) = (5Z,8Z,11Z,14Z,17Z)-eicosapentaenoyl-CoA + 2 Fe(III)-[cytochrome b5] + 2 H2O. The enzyme catalyses (8Z,11Z,14Z)-eicosatrienoyl-CoA + 2 Fe(II)-[cytochrome b5] + O2 + 2 H(+) = (5Z,8Z,11Z,14Z)-eicosatetraenoyl-CoA + 2 Fe(III)-[cytochrome b5] + 2 H2O. It functions in the pathway lipid metabolism; polyunsaturated fatty acid biosynthesis. Fatty acid desaturase with bifunctional delta-5 and delta-6 activities. Component of a lipid metabolic pathway that catalyzes the biosynthesis of polyunsaturated fatty acids (PUFA) with preference toward n-3 substrates and Delta-6 function. The chain is Acyl-CoA 6-desaturase (fads2) from Danio rerio (Zebrafish).